Reading from the N-terminus, the 391-residue chain is 3-ketoacyl-CoA thiolase (391 aa).

The Acyl-thioester intermediate role is filled by C95. Active-site proton acceptor residues include H347 and C377.

This sequence belongs to the thiolase-like superfamily. Thiolase family. Heterotetramer of two alpha chains (FadB) and two beta chains (FadA).

It localises to the cytoplasm. It catalyses the reaction an acyl-CoA + acetyl-CoA = a 3-oxoacyl-CoA + CoA. Its pathway is lipid metabolism; fatty acid beta-oxidation. Catalyzes the final step of fatty acid oxidation in which acetyl-CoA is released and the CoA ester of a fatty acid two carbons shorter is formed. The protein is 3-ketoacyl-CoA thiolase of Pseudomonas entomophila (strain L48).